Here is a 503-residue protein sequence, read N- to C-terminus: Probable cytosol aminopeptidase (503 aa).

The Mn(2+) site is built by Lys-274 and Asp-279. The active site involves Lys-286. Mn(2+) is bound by residues Asp-297, Asp-356, and Glu-358. Arg-360 is an active-site residue.

Belongs to the peptidase M17 family. Mn(2+) is required as a cofactor.

The protein resides in the cytoplasm. It catalyses the reaction Release of an N-terminal amino acid, Xaa-|-Yaa-, in which Xaa is preferably Leu, but may be other amino acids including Pro although not Arg or Lys, and Yaa may be Pro. Amino acid amides and methyl esters are also readily hydrolyzed, but rates on arylamides are exceedingly low.. The catalysed reaction is Release of an N-terminal amino acid, preferentially leucine, but not glutamic or aspartic acids.. Its function is as follows. Presumably involved in the processing and regular turnover of intracellular proteins. Catalyzes the removal of unsubstituted N-terminal amino acids from various peptides. The sequence is that of Probable cytosol aminopeptidase from Burkholderia mallei (strain SAVP1).